We begin with the raw amino-acid sequence, 247 residues long: tRNA pseudouridine synthase A 1 (247 aa).

Asp53 serves as the catalytic Nucleophile. Substrate is bound at residue Tyr111.

It belongs to the tRNA pseudouridine synthase TruA family. In terms of assembly, homodimer.

It catalyses the reaction uridine(38/39/40) in tRNA = pseudouridine(38/39/40) in tRNA. Functionally, formation of pseudouridine at positions 38, 39 and 40 in the anticodon stem and loop of transfer RNAs. The protein is tRNA pseudouridine synthase A 1 of Bacillus cereus (strain ATCC 14579 / DSM 31 / CCUG 7414 / JCM 2152 / NBRC 15305 / NCIMB 9373 / NCTC 2599 / NRRL B-3711).